A 354-amino-acid chain; its full sequence is S-adenosylmethionine:tRNA ribosyltransferase-isomerase (354 aa).

It belongs to the QueA family. In terms of assembly, monomer.

Its subcellular location is the cytoplasm. The catalysed reaction is 7-aminomethyl-7-carbaguanosine(34) in tRNA + S-adenosyl-L-methionine = epoxyqueuosine(34) in tRNA + adenine + L-methionine + 2 H(+). The protein operates within tRNA modification; tRNA-queuosine biosynthesis. In terms of biological role, transfers and isomerizes the ribose moiety from AdoMet to the 7-aminomethyl group of 7-deazaguanine (preQ1-tRNA) to give epoxyqueuosine (oQ-tRNA). The sequence is that of S-adenosylmethionine:tRNA ribosyltransferase-isomerase from Pseudomonas syringae pv. tomato (strain ATCC BAA-871 / DC3000).